Consider the following 264-residue polypeptide: MTMEILLVNDDGIYSNGLLALKNVISEEFDANITVVAPTNQQSGIGRAISLFEPLRITKTKLADCSEGYAVSGTPTDCVVLGVHQVLKKVPDYVISGINIGENLGTEITTSGTLGAAFEGAHHGAKALACSLQVTTDHLKFKEGESPIDFMNTARIVRNVFKKFIDDEFPCDVININVPDNATENTPVEITKLAKKMYSMHVEERIDPRSRSYYWLDGYPIMDEEDGTDVYAVRNKRNVSVTPLTLDNTAKNLDEFKEKYAKKF.

A divalent metal cation-binding residues include aspartate 10, aspartate 11, serine 43, and asparagine 99.

It belongs to the SurE nucleotidase family. Requires a divalent metal cation as cofactor.

It is found in the cytoplasm. The enzyme catalyses a ribonucleoside 5'-phosphate + H2O = a ribonucleoside + phosphate. Nucleotidase that shows phosphatase activity on nucleoside 5'-monophosphates. The polypeptide is 5'-nucleotidase SurE (Methanococcus maripaludis (strain C5 / ATCC BAA-1333)).